The chain runs to 202 residues: 3-isopropylmalate dehydratase small subunit (202 aa).

The protein belongs to the LeuD family. LeuD type 1 subfamily. Heterodimer of LeuC and LeuD.

The catalysed reaction is (2R,3S)-3-isopropylmalate = (2S)-2-isopropylmalate. Its pathway is amino-acid biosynthesis; L-leucine biosynthesis; L-leucine from 3-methyl-2-oxobutanoate: step 2/4. Its function is as follows. Catalyzes the isomerization between 2-isopropylmalate and 3-isopropylmalate, via the formation of 2-isopropylmaleate. This chain is 3-isopropylmalate dehydratase small subunit, found in Rhizobium rhizogenes (strain K84 / ATCC BAA-868) (Agrobacterium radiobacter).